A 379-amino-acid polypeptide reads, in one-letter code: Cytochrome b (379 aa).

4 helical membrane-spanning segments follow: residues 33 to 53 (FGSL…FLAM), 77 to 98 (WILR…YIHV), 113 to 133 (WNIG…GYVL), and 178 to 198 (FFAF…VHLL). 2 residues coordinate heme b: His-83 and His-97. Residues His-182 and His-196 each contribute to the heme b site. Residue His-201 coordinates a ubiquinone. 4 helical membrane-spanning segments follow: residues 226–246 (IKDI…VLFS), 288–308 (LGGV…PVLH), 320–340 (LSQC…WIGG), and 347–367 (YVIX…XXXX).

The protein belongs to the cytochrome b family. In terms of assembly, the cytochrome bc1 complex contains 11 subunits: 3 respiratory subunits (MT-CYB, CYC1 and UQCRFS1), 2 core proteins (UQCRC1 and UQCRC2) and 6 low-molecular weight proteins (UQCRH/QCR6, UQCRB/QCR7, UQCRQ/QCR8, UQCR10/QCR9, UQCR11/QCR10 and a cleavage product of UQCRFS1). This cytochrome bc1 complex then forms a dimer. Requires heme b as cofactor.

It localises to the mitochondrion inner membrane. Component of the ubiquinol-cytochrome c reductase complex (complex III or cytochrome b-c1 complex) that is part of the mitochondrial respiratory chain. The b-c1 complex mediates electron transfer from ubiquinol to cytochrome c. Contributes to the generation of a proton gradient across the mitochondrial membrane that is then used for ATP synthesis. The chain is Cytochrome b (MT-CYB) from Myotis goudotii (Malagasy mouse-eared bat).